The chain runs to 148 residues: 3-hydroxyacyl-[acyl-carrier-protein] dehydratase FabZ (148 aa).

His48 is an active-site residue.

It belongs to the thioester dehydratase family. FabZ subfamily.

The protein localises to the cytoplasm. The enzyme catalyses a (3R)-hydroxyacyl-[ACP] = a (2E)-enoyl-[ACP] + H2O. Involved in unsaturated fatty acids biosynthesis. Catalyzes the dehydration of short chain beta-hydroxyacyl-ACPs and long chain saturated and unsaturated beta-hydroxyacyl-ACPs. In Nitratiruptor sp. (strain SB155-2), this protein is 3-hydroxyacyl-[acyl-carrier-protein] dehydratase FabZ.